The sequence spans 845 residues: MSENNNDKITVKRTLTLKRSVLETSTVKQNFSHGRTKAVVVETKRRKITRTDEKAETPQPITKPHVAPQRSRPRFEDAKPNEPTAKSNLSSAEIEARLRALEEAHIQERIIREQAEEEARRAKEREESLRQTIQKTEIDETPQEEEEPTLQTQTPSLSPAQSQIEPINIPITPKNTTVIEKRKADETKEDDRNSRRTNLAKSEVRAPKVLKGADEKRRGKITLNSALDEEGSARGRSMAAMRRRQEKFKRAQNQEPKEKISREVILPETITIQELAQRMTERSVDVIKFLMKQGQMMKPGDVIDADVAELIAVEFGHTVKRVLESDVEEGIFNIADNPQKMQLRPPVVTIMGHVDHGKTSLLDAIRKANVVSGEAGGITQHIGAYQVEKNGQKITFIDTPGHAAFTAMRARGARVTDIAVLVVAADDSVMPQTIESINHAKAAGVPIIVAINKIDKPTANAQKVRTELLHHEVFVETMGGETLEVEVSAKTGQNLDKLLEAILLQAEILDLKADPQRTAEGVVIEAKLDRGRGSVATVLVQKGTLHPSDIIVAGNEWGRVRALIDDHGRHVKEAVPSTPIEILGMQGTPQAGDRFAVVTHEAKAREIAEYRQRLARDKAVARQTGSRGSLEQMMSKLQTTGVKEFPLIIKGDVQGSIEAIASALEKLGNEEVRARIVHSAAGGITESDISLAEASHSAVIGFNVRANKQARDCAKTQGIEIRYYNIIYDLVDDIKAAMSGLRSPEQRETFLGNAEILEVFNITKIGKVAGCLVTEGKIERGAGVRLIRDNIVIHEGKLKTLKRFKDEVNEVQSGQECGIAFENYEDIRTGDIIETFHIEHINRTL.

Disordered regions lie at residues 44-91 (KRRK…NLSS) and 119-256 (ARRA…NQEP). Residues 119–129 (ARRAKEREESL) are compositionally biased toward basic and acidic residues. Positions 139-148 (DETPQEEEEP) are enriched in acidic residues. Positions 156-165 (SLSPAQSQIE) are enriched in polar residues. Basic and acidic residues-rich tracts occupy residues 179-194 (IEKR…DRNS) and 202-217 (SEVR…DEKR). The 168-residue stretch at 343–510 (LRPPVVTIMG…AILLQAEILD (168 aa)) folds into the tr-type G domain. The interval 352–359 (GHVDHGKT) is G1. 352–359 (GHVDHGKT) provides a ligand contact to GTP. The tract at residues 377–381 (GITQH) is G2. A G3 region spans residues 398–401 (DTPG). Residues 398–402 (DTPGH) and 452–455 (NKID) contribute to the GTP site. The tract at residues 452–455 (NKID) is G4. The tract at residues 488–490 (SAK) is G5.

It belongs to the TRAFAC class translation factor GTPase superfamily. Classic translation factor GTPase family. IF-2 subfamily.

It localises to the cytoplasm. One of the essential components for the initiation of protein synthesis. Protects formylmethionyl-tRNA from spontaneous hydrolysis and promotes its binding to the 30S ribosomal subunits. Also involved in the hydrolysis of GTP during the formation of the 70S ribosomal complex. This chain is Translation initiation factor IF-2, found in Bartonella henselae (strain ATCC 49882 / DSM 28221 / CCUG 30454 / Houston 1) (Rochalimaea henselae).